A 248-amino-acid chain; its full sequence is Thioesterase FSL2 (248 aa).

Residues serine 125, aspartate 195, and histidine 223 each act as charge relay system in the active site.

This sequence belongs to the LovG family.

It functions in the pathway secondary metabolite biosynthesis. In terms of biological role, thioesterase; part of the gene cluster that mediates the biosynthesis of fusarielins F, G and H, decaketide compounds with 5 methylations and a decaline core that act as mycoestrogens as they stimulate growth of MCF-7 breast cancer cells. The initial compound in the pathway is produced by the reducing polyketide synthase FSL1. FSL1 lacks an active enoyl reductase (ER) domain and biosynthesis of fusarielins relies on the trans-acting enoyl reductase FSL5, before it is released through hydrolysis catalyzed by the thioesterase FSL2. Fusarielins F, G, and H have a C11=C12 cis double bond and is fully reduced between C10 and C11 and between C12 and C13. FSL3 can be involved in the formation of the C11=C12 cis double bond by moving a hypothetical C10=C11 or C12=C13 trans double bond to form prefusarielin. Prefusarielin is oxygenated at C15 and C16 by the cytochrome P450 monooxygenase FSL4, resulting in fusarielin F, which subsequently is epoxidized into fusarielin G by the same enzyme. The final step in the pathway is a reduction of the carboxylic acid moiety to yield fusarielin H via a still undetermined mechanism. In Gibberella zeae (strain ATCC MYA-4620 / CBS 123657 / FGSC 9075 / NRRL 31084 / PH-1) (Wheat head blight fungus), this protein is Thioesterase FSL2.